Consider the following 112-residue polypeptide: Chaperone NapD (112 aa).

The protein belongs to the NapD family. In terms of assembly, interacts with the cytoplasmic NapA precursor.

Its subcellular location is the cytoplasm. Functionally, chaperone for NapA, the catalytic subunit of the periplasmic nitrate reductase. It binds directly and specifically to the twin-arginine signal peptide of NapA, preventing premature interaction with the Tat translocase and premature export. In Paracoccus pantotrophus (Thiosphaera pantotropha), this protein is Chaperone NapD.